The primary structure comprises 213 residues: Heterochromatin protein 1 (213 aa).

Disordered regions lie at residues 1–24 (MGKK…EEEY) and 74–151 (RKDE…TGFD). The region spanning 24-82 (YAVEKILDRRVRKGKVEYYLKWKGYAETENTWEPEGNLDCQDLIQQYELSRKDEANAAA) is the Chromo 1 domain. Residues 89-104 (SKKERPGSSTKVKETG) show a composition bias toward basic and acidic residues. Polar residues predominate over residues 105–115 (RTSTTASNSSG). Residues 154 to 212 (LEAEKILGASDNNGRLTFLIQFKGVDQAEMVPSTVANVKIPQMVIRFYEERLSWYSDNE) form the Chromo 2 domain.

It localises to the nucleus. Structural component of heterochromatin, involved in gene repression and the modification of position-effect-variegation. Recognizes and binds histone H3 tails methylated at 'Lys-9', leading to epigenetic repression. The sequence is that of Heterochromatin protein 1 (HP1A) from Drosophila virilis (Fruit fly).